A 276-amino-acid chain; its full sequence is Hydroxycinnamoyl-CoA hydratase-lyase (276 aa).

4 residues coordinate acetyl-CoA: Lys29, Ala68, Met70, and Leu72. Tyr75 provides a ligand contact to vanillin. Residues Gly120, Ser142, and Trp146 each contribute to the acetyl-CoA site. Vanillin contacts are provided by Gly151 and Tyr239.

The protein belongs to the enoyl-CoA hydratase/isomerase family. Homohexamer; dimer of trimers.

The enzyme catalyses (E)-feruloyl-CoA + H2O = vanillin + acetyl-CoA. It catalyses the reaction (E)-caffeoyl-CoA + H2O = 3,4-dihydroxybenzaldehyde + acetyl-CoA. It carries out the reaction (E)-4-coumaroyl-CoA + H2O = 4-hydroxybenzaldehyde + acetyl-CoA. The catalysed reaction is (E)-feruloyl-CoA + H2O = 3-hydroxy-3-(4-hydroxy-3-methoxyphenyl)propanoyl-CoA. The enzyme catalyses 3-hydroxy-3-(4-hydroxy-3-methoxyphenyl)propanoyl-CoA = vanillin + acetyl-CoA. It catalyses the reaction (E)-caffeoyl-CoA + H2O = 3-hydroxy-3-(3,4-dihydroxyphenyl)propanoyl-CoA. It carries out the reaction 3-hydroxy-3-(3,4-dihydroxyphenyl)propanoyl-CoA = 3,4-dihydroxybenzaldehyde + acetyl-CoA. The catalysed reaction is (E)-4-coumaroyl-CoA + H2O = 3-hydroxy-3-(4-hydroxyphenyl)propanoyl-CoA. The enzyme catalyses 3-hydroxy-3-(4-hydroxyphenyl)propanoyl-CoA = 4-hydroxybenzaldehyde + acetyl-CoA. Catalyzes the hydration of the acyl-CoA thioester of ferulic acid and the subsequent retro-aldol cleavage of the hydrated intermediate to yield vanillin (4-hydroxy-3-methoxy-benzaldehyde). The enzyme is also active with caffeoyl-CoA and 4-coumaroyl-CoA producing 3,4-dihydroxybenzaldehyde and 4-hydroxybenzaldehyde, respectively. The protein is Hydroxycinnamoyl-CoA hydratase-lyase of Pseudomonas fluorescens.